Reading from the N-terminus, the 543-residue chain is MARYIFITGGVVSSLGKGLASAALGALLQSRGYKVRLRKLDPYLNLDPGTMSPYQHGEVFVTDDGAETDLDLGHYERFTGRPATKADNITTGRIYQDILTKERRGDYLGATIQVIPHVTNAIKEFILDSNDAYDFVLCEIGGTVGDIEGLPFFEAIRQIKNDLPRGEAIYVHLTLLPYIPSAGELKTKPTQHSVKELRSIGIQPDILLCRTDREIPKEERRKLGLFCNVRESAVIEARDVDNIYAVPEAYHAAGLDDEVLAAFGIAPKAEPDMISWNVINERIRNPEGQVTIAIVGKYTGMKDAYKSLSEALSHGGIANKVKVNLDWIESEVFENEDPAPFLEHVNGILVPGGFGQRGAEGKIRAAQFARERNVPYFGICFGMQMAVIEAARNLAGIAAANSTEFGPTKEPLVGLMTEWLRGNEREQRSHAGDLGGTMRLGAYPAMLQRGSRVSEVYGGALEISERHRHRYEVNTAYKDRLEQHGLRFSGLSPDGVLPEIVEYEDHPWFIGVQFHPELKSRPFEPHPLFASFVQAAVVQSRLV.

The segment at 1–265 (MARYIFITGG…DDEVLAAFGI (265 aa)) is amidoligase domain. Ser13 contacts CTP. Residue Ser13 participates in UTP binding. 14-19 (SLGKGL) contributes to the ATP binding site. Tyr54 lines the L-glutamine pocket. Asp71 serves as a coordination point for ATP. Mg(2+)-binding residues include Asp71 and Glu139. CTP-binding positions include 146–148 (DIE), 186–191 (KTKPTQ), and Lys222. Residues 186–191 (KTKPTQ) and Lys222 each bind UTP. 238-240 (RDV) is a binding site for ATP. One can recognise a Glutamine amidotransferase type-1 domain in the interval 291-542 (TIAIVGKYTG…VQAAVVQSRL (252 aa)). Residue Gly353 participates in L-glutamine binding. Cys380 (nucleophile; for glutamine hydrolysis) is an active-site residue. Residues 381–384 (FGMQ), Glu404, and Arg470 contribute to the L-glutamine site. Catalysis depends on residues His515 and Glu517.

The protein belongs to the CTP synthase family. Homotetramer.

It catalyses the reaction UTP + L-glutamine + ATP + H2O = CTP + L-glutamate + ADP + phosphate + 2 H(+). It carries out the reaction L-glutamine + H2O = L-glutamate + NH4(+). The enzyme catalyses UTP + NH4(+) + ATP = CTP + ADP + phosphate + 2 H(+). The protein operates within pyrimidine metabolism; CTP biosynthesis via de novo pathway; CTP from UDP: step 2/2. Its activity is regulated as follows. Allosterically activated by GTP, when glutamine is the substrate; GTP has no effect on the reaction when ammonia is the substrate. The allosteric effector GTP functions by stabilizing the protein conformation that binds the tetrahedral intermediate(s) formed during glutamine hydrolysis. Inhibited by the product CTP, via allosteric rather than competitive inhibition. Catalyzes the ATP-dependent amination of UTP to CTP with either L-glutamine or ammonia as the source of nitrogen. Regulates intracellular CTP levels through interactions with the four ribonucleotide triphosphates. This is CTP synthase from Rhodopseudomonas palustris (strain BisB18).